The primary structure comprises 83 residues: Cytochrome b559 subunit alpha (83 aa).

Residues 21 to 35 (VIHSITIPSLFIAGW) form a helical membrane-spanning segment. A heme-binding site is contributed by His-23.

This sequence belongs to the PsbE/PsbF family. Heterodimer of an alpha subunit and a beta subunit. PSII is composed of 1 copy each of membrane proteins PsbA, PsbB, PsbC, PsbD, PsbE, PsbF, PsbH, PsbI, PsbJ, PsbK, PsbL, PsbM, PsbT, PsbX, PsbY, PsbZ, Psb30/Ycf12, at least 3 peripheral proteins of the oxygen-evolving complex and a large number of cofactors. It forms dimeric complexes. The cofactor is heme b.

The protein resides in the plastid. The protein localises to the chloroplast thylakoid membrane. This b-type cytochrome is tightly associated with the reaction center of photosystem II (PSII). PSII is a light-driven water:plastoquinone oxidoreductase that uses light energy to abstract electrons from H(2)O, generating O(2) and a proton gradient subsequently used for ATP formation. It consists of a core antenna complex that captures photons, and an electron transfer chain that converts photonic excitation into a charge separation. This chain is Cytochrome b559 subunit alpha, found in Agrostis stolonifera (Creeping bentgrass).